A 545-amino-acid chain; its full sequence is Luciferin 4-monooxygenase (545 aa).

The Microbody targeting signal signature appears at Ser543–Leu545.

The protein belongs to the ATP-dependent AMP-binding enzyme family. It depends on Mg(2+) as a cofactor.

The protein localises to the peroxisome. The enzyme catalyses firefly D-luciferin + ATP + O2 = firefly oxyluciferin + hnu + AMP + CO2 + diphosphate. Functionally, produces green light with a wavelength of 562 nm. This Photuris pensylvanica (Pennsylania firefly) protein is Luciferin 4-monooxygenase.